The chain runs to 372 residues: NAD(P)H-quinone oxidoreductase subunit 1 (372 aa).

9 consecutive transmembrane segments (helical) span residues 27-47, 65-85, 97-117, 128-148, 166-186, 204-224, 266-286, 308-328, and 347-367; these read AIWM…GVLV, PEYI…KLVF, WLFT…YLIV, VGTG…GLLM, AAQS…IVMM, ILGW…IAAL, ILSA…PIPI, ALGI…AILL, and FLLP…LAFP.

The protein belongs to the complex I subunit 1 family. As to quaternary structure, NDH-1 is composed of at least 11 different subunits.

The protein localises to the cellular thylakoid membrane. The catalysed reaction is a plastoquinone + NADH + (n+1) H(+)(in) = a plastoquinol + NAD(+) + n H(+)(out). It carries out the reaction a plastoquinone + NADPH + (n+1) H(+)(in) = a plastoquinol + NADP(+) + n H(+)(out). Its function is as follows. NDH-1 shuttles electrons from an unknown electron donor, via FMN and iron-sulfur (Fe-S) centers, to quinones in the respiratory and/or the photosynthetic chain. The immediate electron acceptor for the enzyme in this species is believed to be plastoquinone. Couples the redox reaction to proton translocation, and thus conserves the redox energy in a proton gradient. This is NAD(P)H-quinone oxidoreductase subunit 1 from Nostoc sp. (strain PCC 7120 / SAG 25.82 / UTEX 2576).